The chain runs to 417 residues: XO lethal protein 1 (417 aa).

A disordered region spans residues 373–417; it reads VSPGETSSEGISDEHHYEEYDEDDIMEEEEAPSARQDDTYDEDEE. Residues 391–403 are compositionally biased toward acidic residues; it reads EYDEDDIMEEEEA.

It belongs to the GHMP kinase family. Xol-1 subfamily.

The protein localises to the nucleus. Functionally, sex-determining factor that is required for sexual differentiation and X chromosome dosage compensation to promote male development. High expression during gastrulation triggers male development, while low expression at that time triggers hermaphrodite development. Although related to GHMP kinase, its mode of action remains unclear. The polypeptide is XO lethal protein 1 (Caenorhabditis elegans).